A 158-amino-acid polypeptide reads, in one-letter code: Crossover junction endodeoxyribonuclease RuvC (158 aa).

Catalysis depends on residues Asp7, Glu67, and Asp140. Positions 7, 67, and 140 each coordinate Mg(2+).

This sequence belongs to the RuvC family. Homodimer which binds Holliday junction (HJ) DNA. The HJ becomes 2-fold symmetrical on binding to RuvC with unstacked arms; it has a different conformation from HJ DNA in complex with RuvA. In the full resolvosome a probable DNA-RuvA(4)-RuvB(12)-RuvC(2) complex forms which resolves the HJ. Mg(2+) serves as cofactor.

The protein localises to the cytoplasm. It catalyses the reaction Endonucleolytic cleavage at a junction such as a reciprocal single-stranded crossover between two homologous DNA duplexes (Holliday junction).. The RuvA-RuvB-RuvC complex processes Holliday junction (HJ) DNA during genetic recombination and DNA repair. Endonuclease that resolves HJ intermediates. Cleaves cruciform DNA by making single-stranded nicks across the HJ at symmetrical positions within the homologous arms, yielding a 5'-phosphate and a 3'-hydroxyl group; requires a central core of homology in the junction. The consensus cleavage sequence is 5'-(A/T)TT(C/G)-3'. Cleavage occurs on the 3'-side of the TT dinucleotide at the point of strand exchange. HJ branch migration catalyzed by RuvA-RuvB allows RuvC to scan DNA until it finds its consensus sequence, where it cleaves and resolves the cruciform DNA. The polypeptide is Crossover junction endodeoxyribonuclease RuvC (Dictyoglomus thermophilum (strain ATCC 35947 / DSM 3960 / H-6-12)).